The sequence spans 273 residues: Shikimate dehydrogenase (NADP(+)) (273 aa).

Shikimate is bound by residues 14 to 16 and Thr61; that span reads SKS. Lys65 functions as the Proton acceptor in the catalytic mechanism. Glu77 contributes to the NADP(+) binding site. Shikimate contacts are provided by Asn86 and Asp102. NADP(+) is bound by residues 126–130, 150–155, and Met214; these read GAGGA and NRTLSK. Residue Tyr216 coordinates shikimate. Gly238 is an NADP(+) binding site.

This sequence belongs to the shikimate dehydrogenase family. Homodimer.

It carries out the reaction shikimate + NADP(+) = 3-dehydroshikimate + NADPH + H(+). It participates in metabolic intermediate biosynthesis; chorismate biosynthesis; chorismate from D-erythrose 4-phosphate and phosphoenolpyruvate: step 4/7. Involved in the biosynthesis of the chorismate, which leads to the biosynthesis of aromatic amino acids. Catalyzes the reversible NADPH linked reduction of 3-dehydroshikimate (DHSA) to yield shikimate (SA). The polypeptide is Shikimate dehydrogenase (NADP(+)) (Photobacterium profundum (strain SS9)).